The primary structure comprises 251 residues: Imidazole glycerol phosphate synthase subunit HisF (251 aa).

Residues D11 and D130 contribute to the active site.

Belongs to the HisA/HisF family. In terms of assembly, heterodimer of HisH and HisF.

It is found in the cytoplasm. It carries out the reaction 5-[(5-phospho-1-deoxy-D-ribulos-1-ylimino)methylamino]-1-(5-phospho-beta-D-ribosyl)imidazole-4-carboxamide + L-glutamine = D-erythro-1-(imidazol-4-yl)glycerol 3-phosphate + 5-amino-1-(5-phospho-beta-D-ribosyl)imidazole-4-carboxamide + L-glutamate + H(+). Its pathway is amino-acid biosynthesis; L-histidine biosynthesis; L-histidine from 5-phospho-alpha-D-ribose 1-diphosphate: step 5/9. In terms of biological role, IGPS catalyzes the conversion of PRFAR and glutamine to IGP, AICAR and glutamate. The HisF subunit catalyzes the cyclization activity that produces IGP and AICAR from PRFAR using the ammonia provided by the HisH subunit. The protein is Imidazole glycerol phosphate synthase subunit HisF of Pelagibacter ubique (strain HTCC1062).